The primary structure comprises 149 residues: D-aminoacyl-tRNA deacylase (149 aa).

A Gly-cisPro motif, important for rejection of L-amino acids motif is present at residues Gly137–Pro138.

This sequence belongs to the DTD family. As to quaternary structure, homodimer.

Its subcellular location is the cytoplasm. The catalysed reaction is glycyl-tRNA(Ala) + H2O = tRNA(Ala) + glycine + H(+). It carries out the reaction a D-aminoacyl-tRNA + H2O = a tRNA + a D-alpha-amino acid + H(+). An aminoacyl-tRNA editing enzyme that deacylates mischarged D-aminoacyl-tRNAs. Also deacylates mischarged glycyl-tRNA(Ala), protecting cells against glycine mischarging by AlaRS. Acts via tRNA-based rather than protein-based catalysis; rejects L-amino acids rather than detecting D-amino acids in the active site. By recycling D-aminoacyl-tRNA to D-amino acids and free tRNA molecules, this enzyme counteracts the toxicity associated with the formation of D-aminoacyl-tRNA entities in vivo and helps enforce protein L-homochirality. In Clostridium novyi (strain NT), this protein is D-aminoacyl-tRNA deacylase.